The chain runs to 155 residues: Riboflavin synthase (155 aa).

The protein belongs to the DMRL synthase family.

The enzyme catalyses 2 6,7-dimethyl-8-(1-D-ribityl)lumazine + H(+) = 5-amino-6-(D-ribitylamino)uracil + riboflavin. Its pathway is cofactor biosynthesis; riboflavin biosynthesis; riboflavin from 2-hydroxy-3-oxobutyl phosphate and 5-amino-6-(D-ribitylamino)uracil: step 2/2. The protein is Riboflavin synthase (ribC) of Aeropyrum pernix (strain ATCC 700893 / DSM 11879 / JCM 9820 / NBRC 100138 / K1).